Consider the following 64-residue polypeptide: Large ribosomal subunit protein bL35 (64 aa).

It belongs to the bacterial ribosomal protein bL35 family.

This Coxiella burnetii (strain RSA 493 / Nine Mile phase I) protein is Large ribosomal subunit protein bL35.